The sequence spans 84 residues: Small ribosomal subunit protein uS17c (84 aa).

This sequence belongs to the universal ribosomal protein uS17 family. As to quaternary structure, part of the 30S ribosomal subunit.

It localises to the plastid. Its subcellular location is the chloroplast. One of the primary rRNA binding proteins, it binds specifically to the 5'-end of 16S ribosomal RNA. The protein is Small ribosomal subunit protein uS17c (rps17) of Phaeodactylum tricornutum (strain CCAP 1055/1).